The sequence spans 102 residues: ATP-dependent Clp protease adapter protein ClpS (102 aa).

The protein belongs to the ClpS family. Binds to the N-terminal domain of the chaperone ClpA.

Functionally, involved in the modulation of the specificity of the ClpAP-mediated ATP-dependent protein degradation. The protein is ATP-dependent Clp protease adapter protein ClpS of Shewanella frigidimarina (strain NCIMB 400).